The following is a 242-amino-acid chain: Agamous-like MADS-box protein AGL8 (242 aa).

One can recognise an MADS-box domain in the interval 3 to 57 (RGRVQLKRIENKINRQVTFSKRRSGLLKKAHEISVLCDAEVALIVFSSKGKLFEY). The K-box domain maps to 88 to 178 (SENWVLEHAK…LKKIKEREKK (91 aa)). Positions 89–178 (ENWVLEHAKL…LKKIKEREKK (90 aa)) form a coiled coil.

In terms of assembly, homodimer capable of binding to CArG-box sequences. As to expression, vascular tissue of cauline leaves, floral shoot apex and valves of carpels and fruits.

The protein resides in the nucleus. Probable transcription factor that promotes early floral meristem identity in synergy with APETALA1 and CAULIFLOWER. Is required subsequently for the transition of an inflorescence meristem into a floral meristem. Seems to be partially redundant to the function of APETALA1 and CAULIFLOWER in the up-regulation of LEAFY. Is also required for normal pattern of cell division, expansion and differentiation during morphogenesis of the silique. Probably not required for fruit elongation but instead is required to prevent ectopic activity of IND. Represses SAUR10 expression in stems and inflorescence branches. In Arabidopsis thaliana (Mouse-ear cress), this protein is Agamous-like MADS-box protein AGL8 (AGL8).